We begin with the raw amino-acid sequence, 224 residues long: uncharacterized protein (224 aa).

4 helical membrane-spanning segments follow: residues 39 to 59 (LICL…FYSI), 70 to 90 (YLSL…ILFA), 103 to 123 (VFVF…IGAI), and 139 to 159 (MHIG…FLIT).

It is found in the membrane. This is an uncharacterized protein from Dictyostelium discoideum (Social amoeba).